A 1053-amino-acid polypeptide reads, in one-letter code: uncharacterized protein (1053 aa).

It belongs to the mycobacterial PPE family.

This is an uncharacterized protein from Mycobacterium tuberculosis (strain ATCC 25618 / H37Rv).